The following is a 647-amino-acid chain: Protein cueball (647 aa).

A signal peptide spans 1–22 (MLWCPSVLVPLIAVAACLPVLA). The Extracellular segment spans residues 23 to 534 (IGTPLEWEFA…CMTPSPWTSN (512 aa)). Asn80 and Asn106 each carry an N-linked (GlcNAc...) asparagine glycan. LDL-receptor class B repeat units lie at residues 119–166 (RNLF…DVCR), 167–211 (RKLY…DQLS), and 212–257 (DRIF…TNDA). An N-linked (GlcNAc...) asparagine glycan is attached at Asn175. Residue Asn316 is glycosylated (N-linked (GlcNAc...) asparagine). EGF-like domains lie at 365-401 (DEKT…SRCE) and 436-473 (EISK…ERCE). 5 disulfide bridges follow: Cys376–Cys389, Cys391–Cys400, Cys440–Cys450, Cys444–Cys461, and Cys463–Cys472. Asn475 is a glycosylation site (N-linked (GlcNAc...) asparagine). Residues 535–555 (VIIVLVLGIVSCFFLVAVIVH) traverse the membrane as a helical segment. Residues 556–647 (GFRRLYKPKR…LIHNMDDDLY (92 aa)) are Cytoplasmic-facing.

Belongs to the cueball family.

Its subcellular location is the cell membrane. In terms of biological role, has a role in spermatogenesis and oogenesis. The sequence is that of Protein cueball from Drosophila persimilis (Fruit fly).